Here is an 854-residue protein sequence, read N- to C-terminus: Protein ROOT HAIR DEFECTIVE 3 homolog 1 (854 aa).

The Cytoplasmic portion of the chain corresponds to 1–680; it reads MDEAAAAEAV…QAHKRGNGRL (680 aa). One can recognise a GB1/RHD3-type G domain in the interval 37–252; that stretch reads GLSYAVVSIM…IAPGGLAGDR (216 aa). 47–54 contributes to the GTP binding site; the sequence is GPQSSGKS. Positions 217 to 242 form a coiled coil; the sequence is ALPSFEEKEEQFREQVQQLRQRFSNS. The helical transmembrane segment at 681-701 threads the bilayer; that stretch reads PPPWAMVAIAVLGFNEIMTLL. Residues 702-704 are Lumenal-facing; the sequence is RNP. A helical transmembrane segment spans residues 705-725; it reads IYLFLLFVGYLLVKALAVQLD. Over 726–854 the chain is Cytoplasmic; it reads INREFQNGVV…NESNNAYSIV (129 aa). 2 stretches are compositionally biased toward low complexity: residues 758–781 and 814–828; these read TEQQ…QQQP and VSPS…VTSP. Positions 758 to 854 are disordered; it reads TEQQQQQGHH…NESNNAYSIV (97 aa). Polar residues predominate over residues 842–854; that stretch reads QPDNESNNAYSIV.

This sequence belongs to the TRAFAC class dynamin-like GTPase superfamily. GB1/RHD3 GTPase family. RHD3 subfamily.

The protein resides in the endoplasmic reticulum membrane. Probable GTP-binding protein that may be involved in cell development. In Oryza sativa subsp. japonica (Rice), this protein is Protein ROOT HAIR DEFECTIVE 3 homolog 1.